A 122-amino-acid chain; its full sequence is Large ribosomal subunit protein uL14 (122 aa).

This sequence belongs to the universal ribosomal protein uL14 family. In terms of assembly, part of the 50S ribosomal subunit. Forms a cluster with proteins L3 and L19. In the 70S ribosome, L14 and L19 interact and together make contacts with the 16S rRNA in bridges B5 and B8.

In terms of biological role, binds to 23S rRNA. Forms part of two intersubunit bridges in the 70S ribosome. This Rhizobium johnstonii (strain DSM 114642 / LMG 32736 / 3841) (Rhizobium leguminosarum bv. viciae) protein is Large ribosomal subunit protein uL14.